The chain runs to 340 residues: Glycerol-3-phosphate dehydrogenase [NAD(P)+] (340 aa).

The NADPH site is built by Ser-11, Trp-12, Arg-33, and Lys-106. Residues Lys-106, Gly-137, and Ser-139 each contribute to the sn-glycerol 3-phosphate site. An NADPH-binding site is contributed by Ala-141. Sn-glycerol 3-phosphate contacts are provided by Lys-192, Asp-245, Ser-255, Arg-256, and Asn-257. Lys-192 (proton acceptor) is an active-site residue. Arg-256 is a binding site for NADPH. NADPH is bound by residues Val-280 and Glu-282.

It belongs to the NAD-dependent glycerol-3-phosphate dehydrogenase family.

The protein localises to the cytoplasm. The enzyme catalyses sn-glycerol 3-phosphate + NAD(+) = dihydroxyacetone phosphate + NADH + H(+). It catalyses the reaction sn-glycerol 3-phosphate + NADP(+) = dihydroxyacetone phosphate + NADPH + H(+). The protein operates within membrane lipid metabolism; glycerophospholipid metabolism. Catalyzes the reduction of the glycolytic intermediate dihydroxyacetone phosphate (DHAP) to sn-glycerol 3-phosphate (G3P), the key precursor for phospholipid synthesis. This chain is Glycerol-3-phosphate dehydrogenase [NAD(P)+], found in Bacillus cereus (strain ATCC 10987 / NRS 248).